We begin with the raw amino-acid sequence, 139 residues long: Nucleoside diphosphate kinase (139 aa).

ATP contacts are provided by Lys-11, Phe-59, Arg-87, Thr-93, Arg-104, and Asn-114. His-117 functions as the Pros-phosphohistidine intermediate in the catalytic mechanism.

This sequence belongs to the NDK family. In terms of assembly, homotetramer. The cofactor is Mg(2+).

Its subcellular location is the cytoplasm. The catalysed reaction is a 2'-deoxyribonucleoside 5'-diphosphate + ATP = a 2'-deoxyribonucleoside 5'-triphosphate + ADP. The enzyme catalyses a ribonucleoside 5'-diphosphate + ATP = a ribonucleoside 5'-triphosphate + ADP. Functionally, major role in the synthesis of nucleoside triphosphates other than ATP. The ATP gamma phosphate is transferred to the NDP beta phosphate via a ping-pong mechanism, using a phosphorylated active-site intermediate. The chain is Nucleoside diphosphate kinase from Moorella thermoacetica (strain ATCC 39073 / JCM 9320).